The primary structure comprises 277 residues: Multiple sugar-binding transport system permease protein MsmG (277 aa).

Transmembrane regions (helical) follow at residues 13-33, 74-94, 110-130, 141-161, 198-218, and 243-263; these read YVLLTVGGILILIPLMVTVFS, VITVLSVLVVMLFIPAAAYSI, LLILGIFVPFQVIMIPITVMM, LIILYLTYAIPQTLFLYVGYI, TTLIINALWFWNDFMLPLLIL, and GPSFASYIVGIITITIVYLIF. Residues 69–263 form the ABC transmembrane type-1 domain; the sequence is FWNSTVITVL…ITITIVYLIF (195 aa).

It belongs to the binding-protein-dependent transport system permease family. MalFG subfamily.

It is found in the cell membrane. Functionally, involved in a binding protein-dependent transport system responsible for the uptake of melibiose, raffinose and isomaltotriose. The chain is Multiple sugar-binding transport system permease protein MsmG (msmG) from Streptococcus mutans serotype c (strain ATCC 700610 / UA159).